The chain runs to 73 residues: uncharacterized protein (73 aa).

This is an uncharacterized protein from Saccharomyces cerevisiae (strain ATCC 204508 / S288c) (Baker's yeast).